Consider the following 210-residue polypeptide: MSGMFSGSISETSGMSLQCTKSAGHWKIVVWDEEGFQGRRHEFTAECPSVLELGFETVRSLKVLSGAWVGFEHAGFQGQQYVLERGEYPSWDAWSGNTSYPAERLTSFRPVACANHRDSRLTIFEQENFLGRKGELSDDYPSLQAMGWDGNEVGSFHVHSGAWVCSQFPGYRGFQYVLECDHHSGDYKHFREWGSHAQTFQVQSIRRIQQ.

Residues 1 to 25 (MSGMFSGSISETSGMSLQCTKSAGH) are N-terminal arm. 2 Beta/gamma crystallin 'Greek key' domains span residues 26–65 (WKIV…KVLS) and 66–112 (GAWV…RPVA). Positions 113–118 (CANHRD) are connecting peptide. Beta/gamma crystallin 'Greek key' domains follow at residues 119–160 (SRLT…HVHS) and 161–209 (GAWV…RRIQ).

The protein belongs to the beta/gamma-crystallin family. Homo/heterodimer, or complexes of higher-order. The structure of beta-crystallin oligomers seems to be stabilized through interactions between the N-terminal arms.

Crystallins are the dominant structural components of the vertebrate eye lens. This Bos taurus (Bovine) protein is Beta-crystallin A4 (CRYBA4).